A 348-amino-acid polypeptide reads, in one-letter code: UPF0283 membrane protein PMI1371 (348 aa).

The next 2 helical transmembrane spans lie at 69–89 (LITVASTILGVSVIAQAGQWI) and 99–119 (IALGAASAGGLIVIAGMGSVI).

Belongs to the UPF0283 family.

The protein localises to the cell inner membrane. This Proteus mirabilis (strain HI4320) protein is UPF0283 membrane protein PMI1371.